The primary structure comprises 281 residues: 3-hydroxyanthranilate 3,4-dioxygenase (281 aa).

The interval 1–162 (MAGVTAIEIP…SNEFKTGKPG (162 aa)) is domain A (catalytic). Arg45 is an O2 binding site. Residues His49, Glu55, and His93 each contribute to the Fe cation site. Residue Glu55 coordinates substrate. Residues Arg97 and Glu107 each contribute to the substrate site. The interval 163 to 179 (KGTFACNAPYEARWTDL) is linker. The interval 180–281 (PVPINRKEFI…GFAITIRMPG (102 aa)) is domain B.

This sequence belongs to the 3-HAO family. Fe(2+) serves as cofactor.

It localises to the cytoplasm. It catalyses the reaction 3-hydroxyanthranilate + O2 = (2Z,4Z)-2-amino-3-carboxymuconate 6-semialdehyde. The protein operates within cofactor biosynthesis; NAD(+) biosynthesis; quinolinate from L-kynurenine: step 3/3. Functionally, catalyzes the oxidative ring opening of 3-hydroxyanthranilate to 2-amino-3-carboxymuconate semialdehyde, which spontaneously cyclizes to quinolinate. This is 3-hydroxyanthranilate 3,4-dioxygenase (haao-1) from Caenorhabditis briggsae.